Here is a 585-residue protein sequence, read N- to C-terminus: DNA ligase (585 aa).

Residue E278 coordinates ATP. The N6-AMP-lysine intermediate role is filled by K280. ATP-binding residues include R285, R301, E330, F370, R444, and K450.

The protein belongs to the ATP-dependent DNA ligase family. Mg(2+) serves as cofactor.

It catalyses the reaction ATP + (deoxyribonucleotide)n-3'-hydroxyl + 5'-phospho-(deoxyribonucleotide)m = (deoxyribonucleotide)n+m + AMP + diphosphate.. Functionally, DNA ligase that seals nicks in double-stranded DNA during DNA replication, DNA recombination and DNA repair. The sequence is that of DNA ligase from Haloferax volcanii (strain ATCC 29605 / DSM 3757 / JCM 8879 / NBRC 14742 / NCIMB 2012 / VKM B-1768 / DS2) (Halobacterium volcanii).